The chain runs to 153 residues: Ribosome maturation factor RimP (153 aa).

Belongs to the RimP family.

The protein localises to the cytoplasm. Its function is as follows. Required for maturation of 30S ribosomal subunits. In Clostridioides difficile (strain 630) (Peptoclostridium difficile), this protein is Ribosome maturation factor RimP.